Consider the following 480-residue polypeptide: Probable cyclodipeptide synthase PUL1 (480 aa).

It participates in siderophore biosynthesis. Functionally, probable cyclodipeptide synthase; part of the PUL gene cluster that mediates the formation of pulcherrimin, a red iron-containing pigment composed of two cyclized and modified leucine molecules that acts as a siderophore, a chelator that binds iron outside the cell for subsequent uptake. Two leucine molecules are cyclized via a cyclodipeptide synthase, and the resulting diketopiperazine is oxidized by a cytochrome P450 monooxygenase to generate pulcherriminic acid (PA), which can then spontaneously bind iron to form pulcherrimin. The probable cyclodipeptide synthase PUL1 and the cytochrome P450 monooxygenase PUL2 encode the enzymes responsible for the two-step pulcherrimin biosynthesis pathway. The sequence is that of Probable cyclodipeptide synthase PUL1 from Kluyveromyces lactis (strain ATCC 8585 / CBS 2359 / DSM 70799 / NBRC 1267 / NRRL Y-1140 / WM37) (Yeast).